The primary structure comprises 294 residues: S-methyl-5'-thioadenosine phosphorylase (294 aa).

Phosphate contacts are provided by residues serine 16, 58-59 (RH), and 91-92 (SA). Methionine 189 is a substrate binding site. Threonine 190 lines the phosphate pocket. Position 213–215 (213–215 (DFD)) interacts with substrate.

Belongs to the PNP/MTAP phosphorylase family. MTAP subfamily. In terms of assembly, homohexamer. Dimer of a homotrimer.

The catalysed reaction is S-methyl-5'-thioadenosine + phosphate = 5-(methylsulfanyl)-alpha-D-ribose 1-phosphate + adenine. The enzyme catalyses 5'-deoxyadenosine + phosphate = 5-deoxy-alpha-D-ribose 1-phosphate + adenine. Its pathway is amino-acid biosynthesis; L-methionine biosynthesis via salvage pathway; S-methyl-5-thio-alpha-D-ribose 1-phosphate from S-methyl-5'-thioadenosine (phosphorylase route): step 1/1. Functionally, catalyzes the reversible phosphorylation of S-methyl-5'-thioadenosine (MTA) to adenine and 5-methylthioribose-1-phosphate. Involved in the breakdown of MTA, a major by-product of polyamine biosynthesis. Responsible for the first step in the methionine salvage pathway after MTA has been generated from S-adenosylmethionine. Has broad substrate specificity with 6-aminopurine nucleosides as preferred substrates. Also catalyzes the phosphorylation of 5'-deoxyadenosine (5'dAdo) to 5-deoxyribose 1-phosphate. Part of a bifunctional DHAP-shunt salvage pathway for SAM by-products. The sequence is that of S-methyl-5'-thioadenosine phosphorylase from Rhodospirillum rubrum (strain ATCC 11170 / ATH 1.1.1 / DSM 467 / LMG 4362 / NCIMB 8255 / S1).